We begin with the raw amino-acid sequence, 312 residues long: NADH-ubiquinone oxidoreductase chain 1 (312 aa).

8 helical membrane passes run 3-23 (FILS…SVAF), 77-97 (ISPI…PFFV), 104-124 (LGGL…MVAG), 150-170 (LALI…VYFF), 174-194 (IYVW…TISL), 226-246 (LIFM…CVIF), 250-270 (DVFN…FIWA), and 289-309 (CFLS…ILLF).

This sequence belongs to the complex I subunit 1 family.

Its subcellular location is the mitochondrion inner membrane. It catalyses the reaction a ubiquinone + NADH + 5 H(+)(in) = a ubiquinol + NAD(+) + 4 H(+)(out). Core subunit of the mitochondrial membrane respiratory chain NADH dehydrogenase (Complex I) that is believed to belong to the minimal assembly required for catalysis. Complex I functions in the transfer of electrons from NADH to the respiratory chain. The immediate electron acceptor for the enzyme is believed to be ubiquinone. The protein is NADH-ubiquinone oxidoreductase chain 1 (mt:ND1) of Drosophila subobscura (Fruit fly).